The chain runs to 492 residues: Aspartyl/glutamyl-tRNA(Asn/Gln) amidotransferase subunit B (492 aa).

Belongs to the GatB/GatE family. GatB subfamily. As to quaternary structure, heterotrimer of A, B and C subunits.

It catalyses the reaction L-glutamyl-tRNA(Gln) + L-glutamine + ATP + H2O = L-glutaminyl-tRNA(Gln) + L-glutamate + ADP + phosphate + H(+). The catalysed reaction is L-aspartyl-tRNA(Asn) + L-glutamine + ATP + H2O = L-asparaginyl-tRNA(Asn) + L-glutamate + ADP + phosphate + 2 H(+). Its function is as follows. Allows the formation of correctly charged Asn-tRNA(Asn) or Gln-tRNA(Gln) through the transamidation of misacylated Asp-tRNA(Asn) or Glu-tRNA(Gln) in organisms which lack either or both of asparaginyl-tRNA or glutaminyl-tRNA synthetases. The reaction takes place in the presence of glutamine and ATP through an activated phospho-Asp-tRNA(Asn) or phospho-Glu-tRNA(Gln). The polypeptide is Aspartyl/glutamyl-tRNA(Asn/Gln) amidotransferase subunit B (Dehalococcoides mccartyi (strain CBDB1)).